The sequence spans 264 residues: 4-hydroxy-tetrahydrodipicolinate reductase (264 aa).

Position 10 to 15 (10 to 15) interacts with NAD(+); sequence GCLGRQ. R37 contributes to the NADP(+) binding site. NAD(+)-binding positions include 99-101 and 121-124; these read GTT and SANL. H153 functions as the Proton donor/acceptor in the catalytic mechanism. A (S)-2,3,4,5-tetrahydrodipicolinate-binding site is contributed by H154. The active-site Proton donor is the K157. 163–164 serves as a coordination point for (S)-2,3,4,5-tetrahydrodipicolinate; that stretch reads GT.

The protein belongs to the DapB family.

It localises to the cytoplasm. The catalysed reaction is (S)-2,3,4,5-tetrahydrodipicolinate + NAD(+) + H2O = (2S,4S)-4-hydroxy-2,3,4,5-tetrahydrodipicolinate + NADH + H(+). The enzyme catalyses (S)-2,3,4,5-tetrahydrodipicolinate + NADP(+) + H2O = (2S,4S)-4-hydroxy-2,3,4,5-tetrahydrodipicolinate + NADPH + H(+). It participates in amino-acid biosynthesis; L-lysine biosynthesis via DAP pathway; (S)-tetrahydrodipicolinate from L-aspartate: step 4/4. Its function is as follows. Catalyzes the conversion of 4-hydroxy-tetrahydrodipicolinate (HTPA) to tetrahydrodipicolinate. The protein is 4-hydroxy-tetrahydrodipicolinate reductase of Ehrlichia ruminantium (strain Gardel).